A 40-amino-acid chain; its full sequence is Dolichyl-diphosphooligosaccharide--protein glycosyltransferase subunit 4 (40 aa).

Residues M1–D4 are Lumenal-facing. The chain crosses the membrane as a helical span at residues V5–Y25. Residues H26–K40 are Cytoplasmic-facing.

It belongs to the OST4 family. Component of the oligosaccharyltransferase (OST) complex.

It is found in the endoplasmic reticulum membrane. Subunit of the oligosaccharyl transferase (OST) complex that catalyzes the initial transfer of a defined glycan (Glc(3)Man(9)GlcNAc(2) in eukaryotes) from the lipid carrier dolichol-pyrophosphate to an asparagine residue within an Asn-X-Ser/Thr consensus motif in nascent polypeptide chains, the first step in protein N-glycosylation. N-glycosylation occurs cotranslationally and the complex associates with the Sec61 complex at the channel-forming translocon complex that mediates protein translocation across the endoplasmic reticulum (ER). All subunits are required for a maximal enzyme activity. This chain is Dolichyl-diphosphooligosaccharide--protein glycosyltransferase subunit 4, found in Drosophila yakuba (Fruit fly).